The sequence spans 89 residues: Putative defensin-like protein 254 (89 aa).

The N-terminal stretch at 1–20 (MHNISFKLLLLCDLFLSSSS) is a signal peptide. 2 disulfide bridges follow: cysteine 31–cysteine 48 and cysteine 37–cysteine 55.

This sequence belongs to the DEFL family.

The protein resides in the secreted. This chain is Putative defensin-like protein 254, found in Arabidopsis thaliana (Mouse-ear cress).